The sequence spans 423 residues: UDP-N-acetylglucosamine 1-carboxyvinyltransferase 1 (423 aa).

Phosphoenolpyruvate is bound at residue 23–24 (KN). Arg-96 lines the UDP-N-acetyl-alpha-D-glucosamine pocket. Catalysis depends on Cys-120, which acts as the Proton donor. Cys-120 bears the 2-(S-cysteinyl)pyruvic acid O-phosphothioketal mark. Residues 125–129 (RPIDL), Asp-309, and Val-331 each bind UDP-N-acetyl-alpha-D-glucosamine.

The protein belongs to the EPSP synthase family. MurA subfamily.

The protein resides in the cytoplasm. The catalysed reaction is phosphoenolpyruvate + UDP-N-acetyl-alpha-D-glucosamine = UDP-N-acetyl-3-O-(1-carboxyvinyl)-alpha-D-glucosamine + phosphate. It participates in cell wall biogenesis; peptidoglycan biosynthesis. Its function is as follows. Cell wall formation. Adds enolpyruvyl to UDP-N-acetylglucosamine. The chain is UDP-N-acetylglucosamine 1-carboxyvinyltransferase 1 from Streptococcus thermophilus (strain CNRZ 1066).